The chain runs to 592 residues: Probable oxidoreductase EphD (592 aa).

The region spanning 30 to 286 is the AB hydrolase-1 domain; sequence PTVVLVHGFP…KAGHFSPMSH (257 aa). Residue S461 coordinates substrate. Y474 serves as the catalytic Proton acceptor.

Belongs to the short-chain dehydrogenases/reductases (SDR) family.

The protein is Probable oxidoreductase EphD (ephD) of Mycobacterium bovis (strain ATCC BAA-935 / AF2122/97).